A 247-amino-acid chain; its full sequence is Cobalt transport protein CbiM (247 aa).

Positions 1 to 21 are cleaved as a signal peptide; that stretch reads MVGWGVLILLMVLWLPRQAYA. A run of 7 helical transmembrane segments spans residues 27–47, 64–84, 96–116, 119–139, 159–179, 181–201, and 202–222; these read GYLPLGWCLFWAALCLPALIL, LVLALSAAFAFVLSALKLPSV, LGAVLFGPMAMSVVGCIILLF, LLLAHGGITTLGANTFSMAVV, GVAVFLAAALGDLSTYLTTSL, LALAFPAPIGGVASSFWKFAS, and IFAVTQVPLAVSEGLLTVIMV.

The protein belongs to the CbiM family. In terms of assembly, forms an energy-coupling factor (ECF) transporter complex composed of an ATP-binding protein (A component, CbiO), a transmembrane protein (T component, CbiQ) and 2 possible substrate-capture proteins (S components, CbiM and CbiN) of unknown stoichimetry.

It is found in the cell membrane. The protein operates within cofactor biosynthesis; adenosylcobalamin biosynthesis. Its function is as follows. Part of the energy-coupling factor (ECF) transporter complex CbiMNOQ involved in cobalt import. In Kyrpidia tusciae (strain DSM 2912 / NBRC 15312 / T2) (Bacillus tusciae), this protein is Cobalt transport protein CbiM.